A 166-amino-acid chain; its full sequence is SUMO-conjugating enzyme UBC9 (166 aa).

The UBC core domain maps to 4–157 (IAAGRLAEER…VKKEAVKYAA (154 aa)). C93 serves as the catalytic Glycyl thioester intermediate.

The protein belongs to the ubiquitin-conjugating enzyme family. As to quaternary structure, interacts with brd-1 and rad-51. Interacts with smo-1 and sop-2. Interacts with bet-1 (via BROMO domain 2). Interacts with isoforms 1 and 2 of X-box-binding protein xbp-1.

Its subcellular location is the nucleus envelope. Its pathway is protein modification; protein sumoylation. Its function is as follows. Accepts the ubiquitin-like protein smo-1 from the aos-1-uba-2 E1 complex and catalyzes its covalent attachment to other proteins with the help of an E3 ligase such as gei-17. Required to sumoylate the ETS transcription factor lin-1, Polycomb protein sop-2, and intermediate filament proteins, such as ifb-1. Required for embryonic development, fertility, vulval morphogenesis, inhibition of vulval cell fates, lifespan, and neuromuscular activity. The protein is SUMO-conjugating enzyme UBC9 of Caenorhabditis elegans.